The primary structure comprises 472 residues: Trigger factor (472 aa).

A PPIase FKBP-type domain is found at Gly-174–Pro-261. The interval Glu-438–Ser-472 is disordered. Positions Lys-439–Lys-451 are enriched in basic and acidic residues.

The protein belongs to the FKBP-type PPIase family. Tig subfamily.

It is found in the cytoplasm. The catalysed reaction is [protein]-peptidylproline (omega=180) = [protein]-peptidylproline (omega=0). Its function is as follows. Involved in protein export. Acts as a chaperone by maintaining the newly synthesized protein in an open conformation. Functions as a peptidyl-prolyl cis-trans isomerase. This chain is Trigger factor, found in Prochlorococcus marinus (strain NATL2A).